The sequence spans 73 residues: Dermaseptin-1 (73 aa).

Positions 1 to 22 (MAFLKKSIFLALFLGMVSLSIC) are cleaved as a signal peptide. Positions 23–43 (EEEKRENEGEEEQEDDEQSEM) are cleaved as a propeptide — removed in mature form. A disordered region spans residues 25–46 (EKRENEGEEEQEDDEQSEMKRG). A compositionally biased stretch (acidic residues) spans 30-40 (EGEEEQEDDEQ). Leucine 70 is modified (leucine amide). A propeptide spans 72 to 73 (EQ) (removed in mature form).

In terms of tissue distribution, expressed by the skin glands.

Its subcellular location is the secreted. Has antiparasitic activity against trypomastigote form of T.cruzi (IC(50)=0.68 uM) in vitro but not against L.infantum. Probably acts by permeabilizing cell membranes. In vitro, shows no cytotoxicity against macrophages. Has antibacterial activity. This Pithecopus nordestinus (Northeastern Brazilian leaf frog) protein is Dermaseptin-1.